Reading from the N-terminus, the 410-residue chain is Cytochrome P450 105A3 (410 aa).

C359 is a heme binding site.

This sequence belongs to the cytochrome P450 family. Monomer. Heme is required as a cofactor.

Functionally, catalyzes the hydroxylation of sodium ML-236B carboxylate to pravastatin. The polypeptide is Cytochrome P450 105A3 (cyp105A3) (Streptomyces carbophilus).